The primary structure comprises 160 residues: MVAQIRIGQGMDVHAFEEGKFVTLAGVQIPHTHGLKAHSDGDVVLHALCDALLGALALGDIGQHFPDTDPEFKGADSRVLLKHVYQLILDRGYHLNNADITVACERPKLAKYNLEMRQSIADVLNVDLNQISIKATTTEKLGFTGRQEGILATATVLISH.

A divalent metal cation-binding residues include aspartate 12 and histidine 14. 4-CDP-2-C-methyl-D-erythritol 2-phosphate is bound by residues 12-14 (DVH) and 38-39 (HS). Histidine 46 lines the a divalent metal cation pocket. Residues 60-62 (DIG), 65-69 (FPDTD), 136-139 (TTTE), phenylalanine 143, and arginine 146 each bind 4-CDP-2-C-methyl-D-erythritol 2-phosphate.

This sequence belongs to the IspF family. As to quaternary structure, homotrimer. A divalent metal cation is required as a cofactor.

It catalyses the reaction 4-CDP-2-C-methyl-D-erythritol 2-phosphate = 2-C-methyl-D-erythritol 2,4-cyclic diphosphate + CMP. Its pathway is isoprenoid biosynthesis; isopentenyl diphosphate biosynthesis via DXP pathway; isopentenyl diphosphate from 1-deoxy-D-xylulose 5-phosphate: step 4/6. In terms of biological role, involved in the biosynthesis of isopentenyl diphosphate (IPP) and dimethylallyl diphosphate (DMAPP), two major building blocks of isoprenoid compounds. Catalyzes the conversion of 4-diphosphocytidyl-2-C-methyl-D-erythritol 2-phosphate (CDP-ME2P) to 2-C-methyl-D-erythritol 2,4-cyclodiphosphate (ME-CPP) with a corresponding release of cytidine 5-monophosphate (CMP). In Acinetobacter baumannii (strain SDF), this protein is 2-C-methyl-D-erythritol 2,4-cyclodiphosphate synthase.